The following is a 486-amino-acid chain: Cytochrome P450 monooxygenase aclC (486 aa).

A heme-binding site is contributed by Cys-427.

The protein belongs to the cytochrome P450 family. The cofactor is heme.

It functions in the pathway mycotoxin biosynthesis. Its function is as follows. Cytochrome P450 monooxygenase; part of the gene cluster that mediates the biosynthesis of aspirochlorine (or antibiotic A30641), an unusual halogenated spiro compound with distinctive antifungal properties due to selective inhibition of protein biosynthesis, and which is also active against bacteria, viruses, and murine tumor cells. The non-ribosomal peptide synthetase (NRPS) aclP is responsible the formation of the diketopiperazine (DKP) core from the condensation of 2 phenylalanine residues. One Phe residue is tailored into chlorotyrosine by hydroxylation and chlorination, whereas the second Phe undergoes an unprecedented C-C bond cleavage to be converted into glycine. After formation of the DKP, sulfur is incorporated into the DKP by conjugation with glutathione by aclG, followed by its stepwise degradation to the thiol by aclI, aclJ and aclK, and the dithiol oxidation by aclT. In addition, oxygenases (aclB, aclC, aclL and aclO) and O-methyltransferases (aclM and aclU) act as tailoring enzymes to produce the intermediate dechloroaspirochlorine. Ultimately, chlorination of dechloroaspirochlorine by the halogenase aclH is the last step in the aspirochlorine pathway. This chain is Cytochrome P450 monooxygenase aclC, found in Aspergillus oryzae (strain ATCC 42149 / RIB 40) (Yellow koji mold).